The sequence spans 648 residues: Cell surface glycoprotein MUC18 (648 aa).

The signal sequence occupies residues 1 to 23; sequence MGLPKLVCVFLFAACCCCRRAAG. Ig-like V-type domains follow at residues 24–131 and 141–244; these read VPGE…HYVE and PTIQ…KEVT. The Extracellular portion of the chain corresponds to 24-563; that stretch reads VPGEEKQPVP…LPQPESKGVV (540 aa). Cystine bridges form between Cys50/Cys118, Cys163/Cys225, Cys274/Cys322, Cys367/Cys409, and Cys454/Cys501. N-linked (GlcNAc...) asparagine glycosylation is present at Asn58. 3 consecutive Ig-like C2-type domains span residues 246–332, 337–426, and 432–512; these read PVFY…TTIT, PLEL…QLVS, and SPWM…SNTT. The interval 281–304 is disordered; the sequence is QPHFTINKKDPSTGEMEEESTDEN. Residue Asn510 is glycosylated (N-linked (GlcNAc...) asparagine). Positions 532-549 are enriched in polar residues; sequence TGLSTLTVSPHTRANSTS. The tract at residues 532–554 is disordered; it reads TGLSTLTVSPHTRANSTSTEKKL. A helical transmembrane segment spans residues 564-584; that stretch reads IVAVIVCTLVLAVLGAALYFF. Residues 585-648 are Cytoplasmic-facing; the sequence is YKKGKLPCGR…QGEKYIDLRH (64 aa). Phosphoserine is present on residues Ser608 and Ser616. Positions 625 to 648 are disordered; that stretch reads LLQGSNGDKRAPGDQGEKYIDLRH. A compositionally biased stretch (basic and acidic residues) spans 631 to 648; that stretch reads GDKRAPGDQGEKYIDLRH.

As to expression, detected in melanoma cell lines.

The protein localises to the membrane. In terms of biological role, plays a role in cell adhesion, and in cohesion of the endothelial monolayer at intercellular junctions in vascular tissue. Its expression may allow melanoma cells to interact with cellular elements of the vascular system, thereby enhancing hematogeneous tumor spread. Could be an adhesion molecule active in neural crest cells during embryonic development. Acts as a surface receptor that triggers tyrosine phosphorylation of FYN and PTK2/FAK1, and a transient increase in the intracellular calcium concentration. The sequence is that of Cell surface glycoprotein MUC18 (Mcam) from Mus musculus (Mouse).